A 341-amino-acid polypeptide reads, in one-letter code: Ribosomal RNA small subunit methyltransferase H (341 aa).

Residues 47 to 49 (GGY), D64, F91, D109, and Q116 contribute to the S-adenosyl-L-methionine site.

Belongs to the methyltransferase superfamily. RsmH family.

The protein resides in the cytoplasm. The enzyme catalyses cytidine(1402) in 16S rRNA + S-adenosyl-L-methionine = N(4)-methylcytidine(1402) in 16S rRNA + S-adenosyl-L-homocysteine + H(+). In terms of biological role, specifically methylates the N4 position of cytidine in position 1402 (C1402) of 16S rRNA. This chain is Ribosomal RNA small subunit methyltransferase H, found in Rhizobium etli (strain ATCC 51251 / DSM 11541 / JCM 21823 / NBRC 15573 / CFN 42).